Consider the following 75-residue polypeptide: Small ribosomal subunit protein bS18 (75 aa).

It belongs to the bacterial ribosomal protein bS18 family. Part of the 30S ribosomal subunit. Forms a tight heterodimer with protein bS6.

Its function is as follows. Binds as a heterodimer with protein bS6 to the central domain of the 16S rRNA, where it helps stabilize the platform of the 30S subunit. The protein is Small ribosomal subunit protein bS18 of Paracoccus denitrificans (strain Pd 1222).